We begin with the raw amino-acid sequence, 314 residues long: Methionyl-tRNA formyltransferase (314 aa).

Residue 113 to 116 (SLLP) participates in (6S)-5,6,7,8-tetrahydrofolate binding.

The protein belongs to the Fmt family.

It carries out the reaction L-methionyl-tRNA(fMet) + (6R)-10-formyltetrahydrofolate = N-formyl-L-methionyl-tRNA(fMet) + (6S)-5,6,7,8-tetrahydrofolate + H(+). Functionally, attaches a formyl group to the free amino group of methionyl-tRNA(fMet). The formyl group appears to play a dual role in the initiator identity of N-formylmethionyl-tRNA by promoting its recognition by IF2 and preventing the misappropriation of this tRNA by the elongation apparatus. This chain is Methionyl-tRNA formyltransferase, found in Pseudomonas savastanoi pv. phaseolicola (strain 1448A / Race 6) (Pseudomonas syringae pv. phaseolicola (strain 1448A / Race 6)).